Consider the following 573-residue polypeptide: Acyl-coenzyme A synthetase ACSM1, mitochondrial (573 aa).

The transit peptide at 1-35 (MQWLKSFQICKVLQGFSLSPTQLHRRLFSRVGAPR) directs the protein to the mitochondrion. Lys81 is subject to N6-succinyllysine. Lys142 carries the N6-acetyllysine; alternate modification. Lys142 carries the post-translational modification N6-succinyllysine; alternate. At Lys179 the chain carries N6-succinyllysine. Residue Lys200 is modified to N6-acetyllysine; alternate. Residue Lys200 is modified to N6-succinyllysine; alternate. Lys210 is subject to N6-acetyllysine. Residue 222-230 (TSGTTGYPK) participates in ATP binding. Residues Lys233 and Lys324 each carry the N6-succinyllysine modification. 2 positions are modified to N6-acetyllysine; alternate: Lys352 and Lys387. Residues Lys352 and Lys387 each carry the N6-succinyllysine; alternate modification. Positions 448 and 463 each coordinate ATP. N6-succinyllysine is present on Lys501. Lys527 is modified (N6-acetyllysine). Lys534 bears the N6-acetyllysine; alternate mark. Lys534 bears the N6-succinyllysine; alternate mark. Position 545 is an N6-acetyllysine (Lys545). Lys559 is a binding site for ATP.

This sequence belongs to the ATP-dependent AMP-binding enzyme family. As to quaternary structure, monomer. The cofactor is Mg(2+). Requires Mn(2+) as cofactor. In terms of tissue distribution, highly expressed in liver and kidney.

It is found in the mitochondrion matrix. Its subcellular location is the mitochondrion. The catalysed reaction is a medium-chain fatty acid + ATP + CoA = a medium-chain fatty acyl-CoA + AMP + diphosphate. It catalyses the reaction benzoate + ATP + CoA = benzoyl-CoA + AMP + diphosphate. It carries out the reaction (R)-lipoate + GTP + H(+) = (R)-lipoyl-GMP + diphosphate. The enzyme catalyses octanoate + ATP + CoA = octanoyl-CoA + AMP + diphosphate. The catalysed reaction is decanoate + ATP + CoA = decanoyl-CoA + AMP + diphosphate. It catalyses the reaction dodecanoate + ATP + CoA = dodecanoyl-CoA + AMP + diphosphate. It carries out the reaction tetradecanoate + ATP + CoA = tetradecanoyl-CoA + AMP + diphosphate. The enzyme catalyses hexanoate + ATP + CoA = hexanoyl-CoA + AMP + diphosphate. The catalysed reaction is butanoate + ATP + CoA = butanoyl-CoA + AMP + diphosphate. It catalyses the reaction hexadecanoate + ATP + CoA = hexadecanoyl-CoA + AMP + diphosphate. Catalyzes the activation of fatty acids by CoA to produce an acyl-CoA, the first step in fatty acid metabolism. Capable of activating medium-chain fatty acids (e.g. butyric (C4) to decanoic (C10) acids), and certain carboxylate-containing xenobiotics, e.g. benzoate. Also catalyzes the activation of lipoate to lipoyl-nucleoside monophosphate. Activates lipoate with GTP at a 1000-fold higher rate than with ATP and activates both (R)- and (S)-lipoate to the respective lipoyl-GMP, with a preference for (R)-lipoate. The protein is Acyl-coenzyme A synthetase ACSM1, mitochondrial (Acsm1) of Mus musculus (Mouse).